We begin with the raw amino-acid sequence, 170 residues long: Translocator protein 2 (170 aa).

5 helical membrane-spanning segments follow: residues 3 to 23, 45 to 65, 78 to 98, 104 to 124, and 130 to 150; these read LQGA…WLFT, VLLL…YLVW, LPLG…VLFF, GLAL…ALIW, and LAAL…ALTY.

This sequence belongs to the TspO/BZRP family. Homotetramer. May also form homodimer. As to expression, expressed in erythrocytes (at protein level).

It is found in the endoplasmic reticulum membrane. The protein resides in the cell membrane. In terms of biological role, cholesterol-binding protein involved in the redistribution of cholesterol from lipid droplets to the endoplasmic reticulum. Required to meet cholesterol demands during erythropoietic differentiation. May play a role in transport processes at the plasma membrane of erythrocytes, including regulating VDAC-mediated ATP export, and import of the heme precursors protoporphyrin IX and 5-aminolevulinic acid. The protein is Translocator protein 2 (TSPO2) of Homo sapiens (Human).